Reading from the N-terminus, the 245-residue chain is Exosome complex component RRP41 (245 aa).

An N-acetylalanine modification is found at A2.

It belongs to the RNase PH family. In terms of assembly, component of the RNA exosome core complex (Exo-9), composed of EXOSC1, EXOSC2, EXOSC3, EXOSC4, EXOSC5, EXOSC6, EXOSC7, EXOSC8 and EXOSC9; within the complex interacts with EXOSC2, EXOSC7 and EXOSC9. The catalytically inactive RNA exosome core complex (Exo-9) associates with the catalytic subunit EXOSC10/RRP6. Exo-9 may associate with DIS3 to form the nucleolar exosome complex, or DIS3L to form the cytoplasmic exosome complex. Exo-9 is formed by a hexameric base ring consisting of the heterodimers EXOSC4-EXOSC9, EXOSC5-EXOSC8 and EXOSC6-EXOSC7, and a cap ring consisting of EXOSC1, EXOSC2 and EXOSC3. The RNA exosome complex associates with cofactors C1D/RRP47, MPHOSPH6/MPP6 and MTREX/MTR4. Interacts with DDX60. Interacts with DIS3; the interaction is direct.

Its subcellular location is the cytoplasm. The protein resides in the nucleus. It localises to the nucleolus. The protein localises to the nucleoplasm. In terms of biological role, non-catalytic component of the RNA exosome complex which has 3'-&gt;5' exoribonuclease activity and participates in a multitude of cellular RNA processing and degradation events. In the nucleus, the RNA exosome complex is involved in proper maturation of stable RNA species such as rRNA, snRNA and snoRNA, in the elimination of RNA processing by-products and non-coding 'pervasive' transcripts, such as antisense RNA species and promoter-upstream transcripts (PROMPTs), and of mRNAs with processing defects, thereby limiting or excluding their export to the cytoplasm. The RNA exosome may be involved in Ig class switch recombination (CSR) and/or Ig variable region somatic hypermutation (SHM) by targeting AICDA deamination activity to transcribed dsDNA substrates. In the cytoplasm, the RNA exosome complex is involved in general mRNA turnover and specifically degrades inherently unstable mRNAs containing AU-rich elements (AREs) within their 3' untranslated regions, and in RNA surveillance pathways, preventing translation of aberrant mRNAs. It seems to be involved in degradation of histone mRNA. The catalytic inactive RNA exosome core complex of 9 subunits (Exo-9) is proposed to play a pivotal role in the binding and presentation of RNA for ribonucleolysis, and to serve as a scaffold for the association with catalytic subunits and accessory proteins or complexes. EXOSC4 binds to ARE-containing RNAs. This Mus musculus (Mouse) protein is Exosome complex component RRP41 (Exosc4).